A 299-amino-acid chain; its full sequence is MRKYSQRHIPVMVREVIEFLKPEDEKIILDCTVGEGGHSRAILEHCPGCRIIGIDVDSEVLRIAEEKLKEFSDRASLFKISYREADFLLKTLGVEKVDGILMDLGVSTYQLKGENRGFTFEREEPLDMRMDLESEVTAQKVLNELPEEELARIIFEYGEEKKFARRIARKIVENRPLNTTLDLVKAVREALPSYEIRRRKRHFATKTFQAIRIYVNRELENLKEFLRKAEDLLNPGGRIVVISFHSLEDRIVKETFRNSKKLRILTEKPVRPSEEEIRENPRARSGRLRAAERIEKGGD.

S-adenosyl-L-methionine-binding positions include 36-38 (GGH), aspartate 55, aspartate 103, and glutamine 110. Composition is skewed to basic and acidic residues over residues 268 to 282 (KPVRPSEEEIRENPR) and 289 to 299 (RAAERIEKGGD). The disordered stretch occupies residues 268–299 (KPVRPSEEEIRENPRARSGRLRAAERIEKGGD).

The protein belongs to the methyltransferase superfamily. RsmH family.

The protein resides in the cytoplasm. It carries out the reaction cytidine(1402) in 16S rRNA + S-adenosyl-L-methionine = N(4)-methylcytidine(1402) in 16S rRNA + S-adenosyl-L-homocysteine + H(+). In terms of biological role, specifically methylates the N4 position of cytidine in position 1402 (C1402) of 16S rRNA. The protein is Ribosomal RNA small subunit methyltransferase H of Thermotoga sp. (strain RQ2).